A 210-amino-acid chain; its full sequence is Orotate phosphoribosyltransferase (210 aa).

Lysine 26 contacts 5-phospho-alpha-D-ribose 1-diphosphate. An orotate-binding site is contributed by 34 to 35; that stretch reads FF. 5-phospho-alpha-D-ribose 1-diphosphate contacts are provided by residues 72 to 73, arginine 98, lysine 99, lysine 102, histidine 104, and 123 to 131; these read YK and DDVITAGTA. The orotate site is built by threonine 127 and arginine 155.

Belongs to the purine/pyrimidine phosphoribosyltransferase family. PyrE subfamily. Homodimer. The cofactor is Mg(2+).

The catalysed reaction is orotidine 5'-phosphate + diphosphate = orotate + 5-phospho-alpha-D-ribose 1-diphosphate. Its pathway is pyrimidine metabolism; UMP biosynthesis via de novo pathway; UMP from orotate: step 1/2. In terms of biological role, catalyzes the transfer of a ribosyl phosphate group from 5-phosphoribose 1-diphosphate to orotate, leading to the formation of orotidine monophosphate (OMP). The protein is Orotate phosphoribosyltransferase of Legionella pneumophila (strain Paris).